We begin with the raw amino-acid sequence, 2149 residues long: Oxygen-regulated protein 1 (2149 aa).

Positions 1–20 are enriched in polar residues; sequence MSDTPSTGFSMIHPTSSEGQ. Residues 1-25 are disordered; that stretch reads MSDTPSTGFSMIHPTSSEGQVPSPR. Positions 36–118 constitute a Doublecortin 1 domain; sequence KRISFYKSGD…GRKVQPVDLD (83 aa). Positions 127–148 are disordered; that stretch reads WLSSRAVSTHAPPHSVAAPGMP. The Doublecortin 2 domain occupies 152-231; sequence RSLVVFRNGD…REPFKPGNYD (80 aa). Disordered stretches follow at residues 351 to 373, 1435 to 1456, and 1583 to 1613; these read VSKT…RTES, MEEP…SSER, and VTSD…SGEL. Residues 1446–1456 show a composition bias toward polar residues; that stretch reads SVTNSVTSSER.

Interacts (via the doublecortin domains) with microtubules. Interacts with RP1L1. Interacts with MAK.

It localises to the cytoplasm. It is found in the cytoskeleton. The protein resides in the cilium axoneme. The protein localises to the cell projection. Its subcellular location is the cilium. It localises to the photoreceptor outer segment. Microtubule-associated protein regulating the stability and length of the microtubule-based axoneme of photoreceptors. Required for the differentiation of photoreceptor cells, it plays a role in the organization of the outer segment of rod and cone photoreceptors ensuring the correct orientation and higher-order stacking of outer segment disks along the photoreceptor axoneme. This is Oxygen-regulated protein 1 (RP1) from Saimiri boliviensis boliviensis (Bolivian squirrel monkey).